An 87-amino-acid chain; its full sequence is Small ribosomal subunit protein uS17 (87 aa).

The protein belongs to the universal ribosomal protein uS17 family. In terms of assembly, part of the 30S ribosomal subunit.

Functionally, one of the primary rRNA binding proteins, it binds specifically to the 5'-end of 16S ribosomal RNA. The sequence is that of Small ribosomal subunit protein uS17 from Oceanobacillus iheyensis (strain DSM 14371 / CIP 107618 / JCM 11309 / KCTC 3954 / HTE831).